Consider the following 237-residue polypeptide: Ribosomal RNA small subunit methyltransferase G (237 aa).

S-adenosyl-L-methionine is bound by residues Gly-78, Phe-83, 129–130 (AE), and Arg-148.

Belongs to the methyltransferase superfamily. RNA methyltransferase RsmG family.

Its subcellular location is the cytoplasm. In terms of biological role, specifically methylates the N7 position of a guanine in 16S rRNA. The sequence is that of Ribosomal RNA small subunit methyltransferase G from Streptococcus pyogenes serotype M12 (strain MGAS9429).